The following is a 654-amino-acid chain: Periplasmic beta-glucosidase/beta-xylosidase (654 aa).

The N-terminal stretch at 1-25 (MEKSATRQKALLIALPLLFSPLASA) is a signal peptide. Catalysis depends on residues Asp-235 and Asp-360.

This sequence belongs to the glycosyl hydrolase 3 family.

The protein localises to the periplasm. The enzyme catalyses Hydrolysis of terminal, non-reducing beta-D-glucosyl residues with release of beta-D-glucose.. It catalyses the reaction Hydrolysis of (1-&gt;4)-beta-D-xylans, to remove successive D-xylose residues from the non-reducing termini.. In terms of biological role, exhibits both beta-glucosidase and beta-xylosidase activities. The polypeptide is Periplasmic beta-glucosidase/beta-xylosidase (bgxA) (Dickeya chrysanthemi (Pectobacterium chrysanthemi)).